The sequence spans 544 residues: Prolyl 4-hydroxylase subunit alpha-3 (544 aa).

The N-terminal stretch at 1–19 is a signal peptide; the sequence is MGPGARLAALLAVLALGTG. Residues 107–131 adopt a coiled-coil conformation; the sequence is LEASENIRALKDGYEKVEQDLPAFE. A TPR repeat occupies 227-260; that stretch reads EDALDHLAFAYFRAGNVSCALSLSREFLLYSPDN. Asn242 carries an N-linked (GlcNAc...) asparagine glycan. The Fe2OG dioxygenase domain occupies 422–529; sequence YAEYLQVVNY…KWVANKWIHE (108 aa). Fe cation contacts are provided by His440 and Asp442. Residue Asn482 is glycosylated (N-linked (GlcNAc...) asparagine). Fe cation is bound at residue His510. Lys520 lines the 2-oxoglutarate pocket.

This sequence belongs to the P4HA family. In terms of assembly, heterotetramer of two alpha-3 chains and two beta chains (the beta chain is the multi-functional PDI). Fe(2+) serves as cofactor. L-ascorbate is required as a cofactor. N-glycosylation plays no role in the catalytic activity. In terms of tissue distribution, highly expressed in placenta, liver and fetal skin. Weakly expressed in fetal epiphyseal cartilage, fetal liver, fibroblast, lung and skeletal muscle. Expressed also in fibrous cap of carotid atherosclerotic lesions.

The protein resides in the endoplasmic reticulum lumen. It catalyses the reaction L-prolyl-[collagen] + 2-oxoglutarate + O2 = trans-4-hydroxy-L-prolyl-[collagen] + succinate + CO2. Its function is as follows. Catalyzes the post-translational formation of 4-hydroxyproline in -Xaa-Pro-Gly- sequences in collagens and other proteins. This is Prolyl 4-hydroxylase subunit alpha-3 (P4HA3) from Homo sapiens (Human).